The following is a 346-amino-acid chain: Biotin synthase (346 aa).

Residues 38–256 enclose the Radical SAM core domain; it reads RQVQVSTLLS…IAVARIMMPT (219 aa). 3 residues coordinate [4Fe-4S] cluster: Cys53, Cys57, and Cys60. [2Fe-2S] cluster-binding residues include Cys97, Cys128, Cys188, and Arg260.

It belongs to the radical SAM superfamily. Biotin synthase family. Homodimer. The cofactor is [4Fe-4S] cluster. [2Fe-2S] cluster serves as cofactor.

The enzyme catalyses (4R,5S)-dethiobiotin + (sulfur carrier)-SH + 2 reduced [2Fe-2S]-[ferredoxin] + 2 S-adenosyl-L-methionine = (sulfur carrier)-H + biotin + 2 5'-deoxyadenosine + 2 L-methionine + 2 oxidized [2Fe-2S]-[ferredoxin]. It participates in cofactor biosynthesis; biotin biosynthesis; biotin from 7,8-diaminononanoate: step 2/2. Functionally, catalyzes the conversion of dethiobiotin (DTB) to biotin by the insertion of a sulfur atom into dethiobiotin via a radical-based mechanism. The protein is Biotin synthase of Escherichia coli O157:H7.